Here is a 916-residue protein sequence, read N- to C-terminus: Inter-alpha-trypsin inhibitor heavy chain H4 (916 aa).

The first 27 residues, 1 to 27 (MKTPAPGRIHSIVLVLLSLAVLQTSKA), serve as a signal peptide directing secretion. Residues 28–149 (QKVQNDIDIY…KVTFELVYEE (122 aa)) form the VIT domain. N-linked (GlcNAc...) asparagine glycosylation is found at asparagine 82 and asparagine 208. Residues 275–458 (NVIFVIDKSG…LQLQDFYQEV (184 aa)) form the VWFA domain. Asparagine 518 carries an N-linked (GlcNAc...) asparagine glycan. 2 disordered regions span residues 597–616 (PEGQ…ESRG) and 678–701 (PLAP…TDFR). A compositionally biased stretch (low complexity) spans 678 to 689 (PLAPASAPSPTS). O-linked (GalNAc...) serine glycosylation occurs at serine 683. O-linked (GalNAc...) threonine glycosylation is found at threonine 705, threonine 706, and threonine 708. Cysteine 733 and cysteine 911 form a disulfide bridge.

Belongs to the ITIH family. Interacts (via C-terminus) with DNAJC1 (via SANT 2 domain). Post-translationally, appears to be both N- and O-glycosylated.

The protein localises to the secreted. In terms of biological role, type II acute-phase protein (APP) involved in inflammatory responses to trauma. May also play a role in liver development or regeneration. This chain is Inter-alpha-trypsin inhibitor heavy chain H4 (ITIH4), found in Bos taurus (Bovine).